The sequence spans 217 residues: Tegument protein BKRF4 (217 aa).

The tract at residues 1–217 is disordered; the sequence is MAMFLKSRGV…GNNNYNWPWL (217 aa). Positions 32–42 are enriched in polar residues; sequence YTLGSQASQSI. Residues 43–79 show a composition bias toward acidic residues; it reads QEEDVSDTDESDYSDEDEEIDLEEEYPSDEDPSEGSD. The segment at 63 to 64 is interaction with host histones H3/H4; that stretch reads DL. The interaction with host H2A/H2B stretch occupies residues 81–84; that stretch reads DPSW. Over residues 89-102 the composition is skewed to acidic residues; it reads SDESDYSESDEDEA. Positions 106–132 are enriched in low complexity; that stretch reads SQASRSSRVSPSTQQSSGLTPTPSFSR. Residues 136-145 show a composition bias toward pro residues; the sequence is RAPPRPPAPA. Positions 208–217 are enriched in polar residues; it reads GNNNYNWPWL.

It belongs to the lymphocryptovirus BKRF4 family. Forms a complex with the host H3/H4 dimer and histone chaperone ASF1. Also forms a complex with host H2A/H2B dimer. Interacts (via C-terminus) with BGLF2; this interaction is important for infectious virion production.

Its subcellular location is the virion tegument. It localises to the host nucleus. It is found in the host cytoplasm. The protein localises to the host perinuclear region. Functionally, histone-binding protein that binds to histones H2A/H2B, H3/H4 and cellular chromatin to overcome the host DNA damage response triggered by the viral genome ends. Interferes with histone ubiquitination and recruitment of repair proteins. The sequence is that of Tegument protein BKRF4 from Epstein-Barr virus (strain AG876) (HHV-4).